The chain runs to 274 residues: Tryptophan synthase alpha chain (274 aa).

Catalysis depends on proton acceptor residues Glu-49 and Asp-60.

The protein belongs to the TrpA family. As to quaternary structure, tetramer of two alpha and two beta chains.

The enzyme catalyses (1S,2R)-1-C-(indol-3-yl)glycerol 3-phosphate + L-serine = D-glyceraldehyde 3-phosphate + L-tryptophan + H2O. It participates in amino-acid biosynthesis; L-tryptophan biosynthesis; L-tryptophan from chorismate: step 5/5. Its function is as follows. The alpha subunit is responsible for the aldol cleavage of indoleglycerol phosphate to indole and glyceraldehyde 3-phosphate. This is Tryptophan synthase alpha chain from Alkalilimnicola ehrlichii (strain ATCC BAA-1101 / DSM 17681 / MLHE-1).